The primary structure comprises 478 residues: Lactate utilization protein B (478 aa).

4Fe-4S ferredoxin-type domains are found at residues 303 to 333 (GTEF…GHAY) and 352 to 381 (YDDH…LHEQ). Positions 312, 315, 318, 322, 365, 368, and 372 each coordinate [4Fe-4S] cluster.

It belongs to the LutB/YkgF family.

In terms of biological role, is involved in L-lactate degradation and allows cells to grow with lactate as the sole carbon source. Has probably a role as an electron transporter during oxidation of L-lactate. This is Lactate utilization protein B from Oceanobacillus iheyensis (strain DSM 14371 / CIP 107618 / JCM 11309 / KCTC 3954 / HTE831).